We begin with the raw amino-acid sequence, 423 residues long: Probable sucrose-phosphate synthase (423 aa).

It belongs to the glycosyltransferase 1 family.

It carries out the reaction beta-D-fructose 6-phosphate + UDP-alpha-D-glucose = sucrose 6(F)-phosphate + UDP + H(+). Functionally, plays a role in sucrose synthesis by catalyzing the first step of sucrose biosynthesis from UDP-glucose and fructose-6-phosphate. In Thermosipho melanesiensis (strain DSM 12029 / CIP 104789 / BI429), this protein is Probable sucrose-phosphate synthase.